The following is a 309-amino-acid chain: Homoserine O-succinyltransferase (309 aa).

Cys-142 (acyl-thioester intermediate) is an active-site residue. Substrate contacts are provided by Lys-163 and Ser-192. His-235 serves as the catalytic Proton acceptor. Residue Glu-237 is part of the active site. Arg-249 serves as a coordination point for substrate.

Belongs to the MetA family. As to quaternary structure, homodimer.

It is found in the cytoplasm. The enzyme catalyses L-homoserine + succinyl-CoA = O-succinyl-L-homoserine + CoA. It participates in amino-acid biosynthesis; L-methionine biosynthesis via de novo pathway; O-succinyl-L-homoserine from L-homoserine: step 1/1. Its function is as follows. Transfers a succinyl group from succinyl-CoA to L-homoserine, forming succinyl-L-homoserine. The polypeptide is Homoserine O-succinyltransferase (Escherichia coli O17:K52:H18 (strain UMN026 / ExPEC)).